We begin with the raw amino-acid sequence, 131 residues long: MRHYEIVFMVHPDQSEQVPCMIERYSAAITGAEGKIHRLEDWGRRQLAYPINKLHKAHYVLMNVEAPQEVIDELETTFRFNDAVIRSMVMRTKHAVTEASPMVKAKDERRERRDDFANETADDAEAGDSEE.

A disordered region spans residues 98-131; it reads EASPMVKAKDERRERRDDFANETADDAEAGDSEE. Residues 104 to 116 show a composition bias toward basic and acidic residues; the sequence is KAKDERRERRDDF. Residues 120–131 show a composition bias toward acidic residues; that stretch reads TADDAEAGDSEE.

This sequence belongs to the bacterial ribosomal protein bS6 family.

Binds together with bS18 to 16S ribosomal RNA. The sequence is that of Small ribosomal subunit protein bS6 from Salmonella dublin (strain CT_02021853).